Consider the following 720-residue polypeptide: Polyribonucleotide nucleotidyltransferase (720 aa).

Residues D484 and D490 each contribute to the Mg(2+) site. Residues 551–610 form the KH domain; it reads PRMYKISIDPSKIGSVIGSGGKTIRSIIEQTNTTVDIENDGTVVIGATDEASAQKAIKII. An S1 motif domain is found at 620 to 688; that stretch reads GSVYTGKVTR…SQGRINLSRR (69 aa). The disordered stretch occupies residues 697–720; it reads PISRNRDSQPRRSGPFRPQDRSNS.

It belongs to the polyribonucleotide nucleotidyltransferase family. Requires Mg(2+) as cofactor.

Its subcellular location is the cytoplasm. The catalysed reaction is RNA(n+1) + phosphate = RNA(n) + a ribonucleoside 5'-diphosphate. Functionally, involved in mRNA degradation. Catalyzes the phosphorolysis of single-stranded polyribonucleotides processively in the 3'- to 5'-direction. This Dehalococcoides mccartyi (strain ATCC BAA-2266 / KCTC 15142 / 195) (Dehalococcoides ethenogenes (strain 195)) protein is Polyribonucleotide nucleotidyltransferase.